The chain runs to 67 residues: ATP synthase F(0) complex subunit 8 (67 aa).

The helical transmembrane segment at 8-24 (TWFITIVSMLLSLFILM) threads the bilayer. Lys54 is subject to N6-acetyllysine; alternate. At Lys54 the chain carries N6-succinyllysine; alternate. Lys57 carries the N6-acetyllysine modification.

It belongs to the ATPase protein 8 family. In terms of assembly, component of the ATP synthase complex composed at least of ATP5F1A/subunit alpha, ATP5F1B/subunit beta, ATP5MC1/subunit c (homooctomer), MT-ATP6/subunit a, MT-ATP8/subunit 8, ATP5ME/subunit e, ATP5MF/subunit f, ATP5MG/subunit g, ATP5MK/subunit k, ATP5MJ/subunit j, ATP5F1C/subunit gamma, ATP5F1D/subunit delta, ATP5F1E/subunit epsilon, ATP5PF/subunit F6, ATP5PB/subunit b, ATP5PD/subunit d, ATP5PO/subunit OSCP. ATP synthase complex consists of a soluble F(1) head domain (subunits alpha(3) and beta(3)) - the catalytic core - and a membrane F(0) domain - the membrane proton channel (subunits c, a, 8, e, f, g, k and j). These two domains are linked by a central stalk (subunits gamma, delta, and epsilon) rotating inside the F1 region and a stationary peripheral stalk (subunits F6, b, d, and OSCP). Interacts with PRICKLE3.

It is found in the mitochondrion membrane. Functionally, subunit 8, of the mitochondrial membrane ATP synthase complex (F(1)F(0) ATP synthase or Complex V) that produces ATP from ADP in the presence of a proton gradient across the membrane which is generated by electron transport complexes of the respiratory chain. ATP synthase complex consist of a soluble F(1) head domain - the catalytic core - and a membrane F(1) domain - the membrane proton channel. These two domains are linked by a central stalk rotating inside the F(1) region and a stationary peripheral stalk. During catalysis, ATP synthesis in the catalytic domain of F(1) is coupled via a rotary mechanism of the central stalk subunits to proton translocation. In vivo, can only synthesize ATP although its ATP hydrolase activity can be activated artificially in vitro. Part of the complex F(0) domain. The sequence is that of ATP synthase F(0) complex subunit 8 from Dasypus novemcinctus (Nine-banded armadillo).